Consider the following 908-residue polypeptide: Protein translocase subunit SecA (908 aa).

ATP is bound by residues Gln87, 105–109 (GEGKT), and Asp512. Residues 865 to 908 (GGDDGSDEMMAHTPMIRDGDKVGRNDPCPCGSGRKYKQCHGKLS) are disordered. Basic and acidic residues predominate over residues 879 to 888 (MIRDGDKVGR). Zn(2+)-binding residues include Cys892, Cys894, Cys903, and His904. Positions 898 to 908 (RKYKQCHGKLS) are enriched in basic residues.

Belongs to the SecA family. In terms of assembly, monomer and homodimer. Part of the essential Sec protein translocation apparatus which comprises SecA, SecYEG and auxiliary proteins SecDF-YajC and YidC. Zn(2+) is required as a cofactor.

It is found in the cell inner membrane. The protein localises to the cytoplasm. It catalyses the reaction ATP + H2O + cellular proteinSide 1 = ADP + phosphate + cellular proteinSide 2.. Part of the Sec protein translocase complex. Interacts with the SecYEG preprotein conducting channel. Has a central role in coupling the hydrolysis of ATP to the transfer of proteins into and across the cell membrane, serving both as a receptor for the preprotein-SecB complex and as an ATP-driven molecular motor driving the stepwise translocation of polypeptide chains across the membrane. The protein is Protein translocase subunit SecA of Shewanella sp. (strain MR-7).